The primary structure comprises 443 residues: Methyl-coenzyme M reductase subunit beta (443 aa).

A coenzyme M-binding site is contributed by Y367. Residue G369 participates in coenzyme B binding.

This sequence belongs to the methyl-coenzyme M reductase beta subunit family. In terms of assembly, MCR is a hexamer of two alpha, two beta, and two gamma chains, forming a dimer of heterotrimers. Requires coenzyme F430 as cofactor.

The protein localises to the cytoplasm. It catalyses the reaction coenzyme B + methyl-coenzyme M = methane + coenzyme M-coenzyme B heterodisulfide. It functions in the pathway one-carbon metabolism; methyl-coenzyme M reduction; methane from methyl-coenzyme M: step 1/1. In terms of biological role, component of the methyl-coenzyme M reductase (MCR) I that catalyzes the reductive cleavage of methyl-coenzyme M (CoM-S-CH3 or 2-(methylthio)ethanesulfonate) using coenzyme B (CoB or 7-mercaptoheptanoylthreonine phosphate) as reductant which results in the production of methane and the mixed heterodisulfide of CoB and CoM (CoM-S-S-CoB). This is the final step in methanogenesis. The polypeptide is Methyl-coenzyme M reductase subunit beta (mcrB) (Methanococcus vannielii).